The sequence spans 507 residues: UDP-N-acetylmuramoyl-L-alanyl-D-glutamate--2,6-diaminopimelate ligase (507 aa).

Residue Ser-32 participates in UDP-N-acetyl-alpha-D-muramoyl-L-alanyl-D-glutamate binding. An ATP-binding site is contributed by 117-123 (GTNGKTT). UDP-N-acetyl-alpha-D-muramoyl-L-alanyl-D-glutamate is bound by residues 159–160 (TT), Ser-186, Gln-192, and Arg-194. The residue at position 226 (Lys-226) is an N6-carboxylysine. Residues Arg-400, 424-427 (DNPR), Gly-475, and Glu-479 each bind meso-2,6-diaminopimelate. The short motif at 424-427 (DNPR) is the Meso-diaminopimelate recognition motif element.

Belongs to the MurCDEF family. MurE subfamily. Requires Mg(2+) as cofactor. Post-translationally, carboxylation is probably crucial for Mg(2+) binding and, consequently, for the gamma-phosphate positioning of ATP.

It localises to the cytoplasm. It catalyses the reaction UDP-N-acetyl-alpha-D-muramoyl-L-alanyl-D-glutamate + meso-2,6-diaminopimelate + ATP = UDP-N-acetyl-alpha-D-muramoyl-L-alanyl-gamma-D-glutamyl-meso-2,6-diaminopimelate + ADP + phosphate + H(+). It functions in the pathway cell wall biogenesis; peptidoglycan biosynthesis. Its function is as follows. Catalyzes the addition of meso-diaminopimelic acid to the nucleotide precursor UDP-N-acetylmuramoyl-L-alanyl-D-glutamate (UMAG) in the biosynthesis of bacterial cell-wall peptidoglycan. This is UDP-N-acetylmuramoyl-L-alanyl-D-glutamate--2,6-diaminopimelate ligase from Prochlorococcus marinus (strain MIT 9313).